Here is a 167-residue protein sequence, read N- to C-terminus: Ribonuclease P protein subunit p20 (167 aa).

Positions 1–36 are disordered; that stretch reads MMGSNYPEHGTKPRSAKYHKQQNHRVVRKQPPRPAV. Over residues 12–31 the composition is skewed to basic residues; the sequence is KPRSAKYHKQQNHRVVRKQP.

Interacts with Smn.

It localises to the nucleus. The protein resides in the nucleolus. Its subcellular location is the cytoplasm. It is found in the cytoplasmic granule. Functionally, component of ribonuclease P, a protein complex that generates mature tRNA molecules by cleaving their 5'-ends. Also a component of RNase MRP complex, which cleaves pre-rRNA sequences. This chain is Ribonuclease P protein subunit p20, found in Drosophila melanogaster (Fruit fly).